The primary structure comprises 120 residues: cAMP-responsive element-binding protein-like 2 (120 aa).

Positions 1 to 24 (MDDSKVVGGKVKKPGKRGRKPAKI) are disordered. The span at 10-21 (KVKKPGKRGRKP) shows a compositional bias: basic residues. Positions 23–86 (KIDLKAKLER…MAMDQGKIPS (64 aa)) constitute a bZIP domain. The segment at 29–60 (KLERSRQSARECRARKKLRYQYLEELVSSRER) is basic motif. The leucine-zipper stretch occupies residues 62–69 (ICALREEL). Positions 93 to 120 (TGEEQNKSQQNSSRHTKAGKTDANSNSW) are disordered.

It belongs to the bZIP family. ATF subfamily. As to quaternary structure, interacts with CREB1; regulates CREB1 phosphorylation, stability and transcriptional activity. In terms of processing, phosphorylated by AMPK.

The protein resides in the nucleus. In terms of biological role, probable regulator of CREB1 transcriptional activity which is involved in adipose cells differentiation. May also play a regulatory role in the cell cycle. Identification in a chromosomal region frequently deleted in various cancers suggests that it might act as a tumor suppressor. The polypeptide is cAMP-responsive element-binding protein-like 2 (CREBL2) (Homo sapiens (Human)).